Consider the following 276-residue polypeptide: Monoglyceride lipase homolog (276 aa).

It belongs to the orthopoxvirus OPG043 family.

This is Monoglyceride lipase homolog (OPG043) from Cynomys gunnisoni (Gunnison's prairie dog).